Here is a 160-residue protein sequence, read N- to C-terminus: Large ribosomal subunit protein uL15 (160 aa).

The segment covering 1–13 (MKLHELSDNDGAA) has biased composition (basic and acidic residues). The interval 1 to 42 (MKLHELSDNDGAAKKRKRVGRGPGSGTGKMGGRGIKGQKSRS) is disordered. Over residues 21-35 (RGPGSGTGKMGGRGI) the composition is skewed to gly residues.

Belongs to the universal ribosomal protein uL15 family. As to quaternary structure, part of the 50S ribosomal subunit.

Functionally, binds to the 23S rRNA. The sequence is that of Large ribosomal subunit protein uL15 from Roseobacter denitrificans (strain ATCC 33942 / OCh 114) (Erythrobacter sp. (strain OCh 114)).